A 296-amino-acid polypeptide reads, in one-letter code: Homoserine kinase (296 aa).

85 to 95 is a binding site for ATP; sequence PLSRGLGSSAA.

Belongs to the GHMP kinase family. Homoserine kinase subfamily.

The protein resides in the cytoplasm. The catalysed reaction is L-homoserine + ATP = O-phospho-L-homoserine + ADP + H(+). Its pathway is amino-acid biosynthesis; L-threonine biosynthesis; L-threonine from L-aspartate: step 4/5. Catalyzes the ATP-dependent phosphorylation of L-homoserine to L-homoserine phosphate. This is Homoserine kinase from Clostridium acetobutylicum (strain ATCC 824 / DSM 792 / JCM 1419 / IAM 19013 / LMG 5710 / NBRC 13948 / NRRL B-527 / VKM B-1787 / 2291 / W).